Consider the following 53-residue polypeptide: Lectin alpha chain (53 aa).

This sequence belongs to the leguminous lectin family. In terms of assembly, tetramer of two alpha and two beta chains.

In Lathyrus clymenum (Spanish vetchling), this protein is Lectin alpha chain.